Consider the following 278-residue polypeptide: Phosphatidylglycerol--prolipoprotein diacylglyceryl transferase (278 aa).

A run of 4 helical transmembrane segments spans residues 18-38 (IQVH…TILA), 55-75 (LILW…VIFE), 90-110 (WDGG…VYLF), and 115-135 (WIPV…AQGI). Arginine 137 is a binding site for a 1,2-diacyl-sn-glycero-3-phospho-(1'-sn-glycerol). Transmembrane regions (helical) follow at residues 177 to 197 (QPTF…LMSL), 207 to 227 (GEVF…VEGM), and 237 to 257 (IRVS…ILVF).

It belongs to the Lgt family.

Its subcellular location is the cell membrane. The enzyme catalyses L-cysteinyl-[prolipoprotein] + a 1,2-diacyl-sn-glycero-3-phospho-(1'-sn-glycerol) = an S-1,2-diacyl-sn-glyceryl-L-cysteinyl-[prolipoprotein] + sn-glycerol 1-phosphate + H(+). Its pathway is protein modification; lipoprotein biosynthesis (diacylglyceryl transfer). Its function is as follows. Catalyzes the transfer of the diacylglyceryl group from phosphatidylglycerol to the sulfhydryl group of the N-terminal cysteine of a prolipoprotein, the first step in the formation of mature lipoproteins. The sequence is that of Phosphatidylglycerol--prolipoprotein diacylglyceryl transferase from Pediococcus pentosaceus (strain ATCC 25745 / CCUG 21536 / LMG 10740 / 183-1w).